A 34-amino-acid chain; its full sequence is U2-theraphotoxin-Bs1a (34 aa).

Intrachain disulfides connect Cys2–Cys16, Cys9–Cys21, and Cys15–Cys28.

In terms of tissue distribution, expressed by the venom gland.

The protein localises to the secreted. In Brachypelma smithi (Mexican red knee tarantula), this protein is U2-theraphotoxin-Bs1a.